A 261-amino-acid chain; its full sequence is uncharacterized protein (261 aa).

Its subcellular location is the plastid. The protein localises to the chloroplast. This is an uncharacterized protein from Mesostigma viride (Green alga).